Reading from the N-terminus, the 195-residue chain is NADH-quinone oxidoreductase subunit B (195 aa).

Positions 74, 75, 139, and 169 each coordinate [4Fe-4S] cluster.

Belongs to the complex I 20 kDa subunit family. NDH-1 is composed of 14 different subunits. Subunits NuoB, C, D, E, F, and G constitute the peripheral sector of the complex. [4Fe-4S] cluster serves as cofactor.

The protein localises to the cell inner membrane. The enzyme catalyses a quinone + NADH + 5 H(+)(in) = a quinol + NAD(+) + 4 H(+)(out). NDH-1 shuttles electrons from NADH, via FMN and iron-sulfur (Fe-S) centers, to quinones in the respiratory chain. The immediate electron acceptor for the enzyme in this species is believed to be ubiquinone. Couples the redox reaction to proton translocation (for every two electrons transferred, four hydrogen ions are translocated across the cytoplasmic membrane), and thus conserves the redox energy in a proton gradient. The chain is NADH-quinone oxidoreductase subunit B from Methylorubrum populi (strain ATCC BAA-705 / NCIMB 13946 / BJ001) (Methylobacterium populi).